We begin with the raw amino-acid sequence, 579 residues long: MNAIVALCHFCELHGPRTLFCTEVLHAPLPQGAGSGDGAGRGEPADEEEGGIQMSSRIRAHSPAEGASAESSSPGPKKSDMCEGCRSLAAGHPGYISHDKETSIKYVSHQHPNHPQLFSIVRQACVRSLSCEVCPGREGPIFFGDEQHGFVFSHTFFIKDSLARGFQRWYSIIAIMMDRIYLINSWPFLLGKIRGIIDELQGKALKVFEAEQFGCPQRAQRMNTAFTPFLHQRNGNAARSLTSLTNDDSLWACLHTSFAWLLKACGSRLTEKLLEGAPTEDTLVQMEQLAELEEESESWDNSEAEEEEKGPALPEGAEGRELTKCPAESSLLSDCGAWQPRKLSVFKSLRHMRQVLGAPSFRTLAWHVLMGNQVIWKSRDSDLVHSAFEVLRTMLPVGCVRVIPYSSQYEEAYRCNFLGLSPHVQIPPHVLASEFAVVVEVHTATRSSLHAVGCESEQPLSKYEFVVTSGSPVAADRVGPTILNKMEAALTNQNLSVDVVDQCLVCLKEEWMNKVKVLFKFTKVDSRPKEDTQKLLSILGASEEDNVKLLKFWMTGLSKTYKSHLMSTVRSPTALEPRN.

The interval 32–82 (GAGSGDGAGRGEPADEEEGGIQMSSRIRAHSPAEGASAESSSPGPKKSDMC) is disordered. A phosphoserine mark is found at Ser62 and Ser73. The segment covering 63 to 76 (PAEGASAESSSPGP) has biased composition (low complexity). In terms of domain architecture, uDENN FLCN/SMCR8-type spans 86-242 (RSLAAGHPGY…RNGNAARSLT (157 aa)). A coiled-coil region spans residues 285 to 309 (QMEQLAELEEESESWDNSEAEEEEK). A compositionally biased stretch (acidic residues) spans 294-308 (EESESWDNSEAEEEE). A disordered region spans residues 294–321 (EESESWDNSEAEEEEKGPALPEGAEGRE). Phosphoserine is present on residues Ser302, Ser406, Ser537, Ser542, and Ser571. The region spanning 339-491 (QPRKLSVFKS…ILNKMEAALT (153 aa)) is the cDENN FLCN/SMCR8-type domain. The region spanning 493-558 (QNLSVDVVDQ…LLKFWMTGLS (66 aa)) is the dDENN FLCN/SMCR8-type domain.

It belongs to the folliculin family. As to quaternary structure, interacts (via C-terminus) with FNIP1 or FNIP2 (via C-terminus). Component of the lysosomal folliculin complex (LFC), composed of FLCN, FNIP1 (or FNIP2), RagA/RRAGA or RagB/RRAGB GDP-bound, RagC/RRAGC or RagD/RRAGD GTP-bound, and Ragulator. Interaction with FNIP1 or FNIP2 mediates indirect interaction with the PRKAA1, PRKAB1 and PRKAG1 subunits of 5'-AMP-activated protein kinase (AMPK). Interacts with HSP90AA1 in the presence of FNIP1. Interacts with HSP70, STUB1, CDC37, AHSA1, CCT2, STIP1, PTGES3 and PPP5C. Interacts with GABARAP; interaction takes place in the presence of FNIP1 and/or FNIP2. Interacts with RILP; the interaction is direct and promotes association between RILP and RAB34. Interacts with KIF3A and KIF3B. Interacts with lactate dehydrogenase LDHA, but not LDHB; the interaction is direct, may preferentially bind LDHA dimers rather than tetramers, and regulates LDHA activity, acting as an uncompetitive inhibitor. Post-translationally, phosphorylation by ULK1 modulates the interaction with GABARAP and is required to regulate autophagy.

It is found in the lysosome membrane. Its subcellular location is the cytoplasm. The protein resides in the cytosol. The protein localises to the cell projection. It localises to the cilium. It is found in the cytoskeleton. Its subcellular location is the microtubule organizing center. The protein resides in the centrosome. The protein localises to the spindle. It localises to the nucleus. GTPase-activating activity is inhibited in the folliculin complex (LFC), which stabilizes the GDP-bound state of RagA/RRAGA (or RagB/RRAGB), because Arg-164 is located far from the RagC/RRAGC or RagD/RRAGD nucleotide pocket. Disassembly of the LFC complex upon amino acid restimulation liberates the GTPase-activating activity. Its function is as follows. Multi-functional protein, involved in both the cellular response to amino acid availability and in the regulation of glycolysis. GTPase-activating protein that plays a key role in the cellular response to amino acid availability through regulation of the non-canonical mTORC1 signaling cascade controlling the MiT/TFE factors TFEB and TFE3. Activates mTORC1 by acting as a GTPase-activating protein: specifically stimulates GTP hydrolysis by RagC/RRAGC or RagD/RRAGD, promoting the conversion to the GDP-bound state of RagC/RRAGC or RagD/RRAGD, and thereby activating the kinase activity of mTORC1. The GTPase-activating activity is inhibited during starvation and activated in presence of nutrients. Acts as a key component for non-canonical mTORC1-dependent control of the MiT/TFE factors TFEB and TFE3, while it is not involved in mTORC1-dependent phosphorylation of canonical RPS6KB1/S6K1 and EIF4EBP1/4E-BP1. In low-amino acid conditions, the lysosomal folliculin complex (LFC) is formed on the membrane of lysosomes, which inhibits the GTPase-activating activity of FLCN, inactivates mTORC1 and maximizes nuclear translocation of TFEB and TFE3. Upon amino acid restimulation, RagA/RRAGA (or RagB/RRAGB) nucleotide exchange promotes disassembly of the LFC complex and liberates the GTPase-activating activity of FLCN, leading to activation of mTORC1 and subsequent cytoplasmic retention of TFEB and TFE3. Indirectly acts as a positive regulator of Wnt signaling by promoting mTOR-dependent cytoplasmic retention of MiT/TFE factor TFE3. Required for the exit of hematopoietic stem cell from pluripotency by promoting mTOR-dependent cytoplasmic retention of TFE3, thereby increasing Wnt signaling. Involved in the control of embryonic stem cells differentiation; together with LAMTOR1 it is necessary to recruit and activate RagC/RRAGC and RagD/RRAGD at the lysosomes, and to induce exit of embryonic stem cells from pluripotency via non-canonical, mTOR-independent TFE3 inactivation. Acts as an inhibitor of browning of adipose tissue by regulating mTOR-dependent cytoplasmic retention of TFE3. In response to flow stress, regulates STK11/LKB1 accumulation and mTORC1 activation through primary cilia: may act by recruiting STK11/LKB1 to primary cilia for activation of AMPK resided at basal bodies, causing mTORC1 down-regulation. Together with FNIP1 and/or FNIP2, regulates autophagy: following phosphorylation by ULK1, interacts with GABARAP and promotes autophagy. Required for starvation-induced perinuclear clustering of lysosomes by promoting association of RILP with its effector RAB34. Regulates glycolysis by binding to lactate dehydrogenase LDHA, acting as an uncompetitive inhibitor. This chain is Folliculin, found in Bos taurus (Bovine).